The sequence spans 104 residues: UPF0235 protein MTH_637 (104 aa).

This sequence belongs to the UPF0235 family.

This Methanothermobacter thermautotrophicus (strain ATCC 29096 / DSM 1053 / JCM 10044 / NBRC 100330 / Delta H) (Methanobacterium thermoautotrophicum) protein is UPF0235 protein MTH_637.